Consider the following 538-residue polypeptide: Telomerase Cajal body protein 1 (538 aa).

A disordered region spans residues 1–53 (MKTSEERLVVPDSLSSDQAPAPVPQGSPVDENTDSEPVPQPCGGDDRSQVAAD). Phosphoserine occurs at positions 27 and 87. The segment at 92–128 (EQELSENVSLPVEDTNQPELASGEDVEGVSEEPGPVD) is disordered. The segment covering 113–128 (SGEDVEGVSEEPGPVD) has biased composition (acidic residues). 6 WD repeats span residues 154-194 (AHSE…YSAT), 210-255 (EGDT…LRAS), 260-301 (NHLD…RDCE), 311-352 (GQSG…ALLG), 353-393 (GHQG…HLLW), and 399-438 (VTTN…GDSS). Disordered stretches follow at residues 471–491 (QRMF…GDLP) and 509–538 (CGGG…DGLI). Thr-478 is modified (phosphothreonine). Residue Ser-480 is modified to Phosphoserine. Residues 529–538 (RAEGCGDGLI) are compositionally biased toward gly residues.

Belongs to the TCAB1 family. As to quaternary structure, component of the telomerase holoenzyme complex composed of one molecule of TERT, one molecule of WRAP53/TCAB1, two molecules of H/ACA ribonucleoprotein complex subunits DKC1, NOP10, NHP2 and GAR1, and a telomerase RNA template component (TERC). The telomerase holoenzyme complex is associated with TEP1, SMG6/EST1A and POT1. Interacts with the chaperonin-containing T-complex (TRiC) complex; which mediates the folding of WRAP53/TCAB1. Interacts with COIL. Interacts with SMN1. Interacts with RNF8. Interacts with histone H2AX. Preferentially expressed in testis.

It localises to the nucleus. The protein resides in the cajal body. Its subcellular location is the chromosome. It is found in the telomere. Functionally, RNA chaperone that plays a key role in telomere maintenance and RNA localization to Cajal bodies. Specifically recognizes and binds the Cajal body box (CAB box) present in both small Cajal body RNAs (scaRNAs) and telomerase RNA template component (TERC). Essential component of the telomerase holoenzyme complex, a ribonucleoprotein complex essential for the replication of chromosome termini that elongates telomeres in most eukaryotes. In the telomerase holoenzyme complex, required to stimulate the catalytic activity of the complex. Acts by specifically binding the CAB box of the TERC RNA and controlling the folding of the CR4/CR5 region of the TERC RNA, a critical step for telomerase activity. In addition, also controls telomerase holoenzyme complex localization to Cajal body. During S phase, required for delivery of TERC to telomeres during S phase and for telomerase activity. In addition to its role in telomere maintenance, also required for Cajal body formation, probably by mediating localization of scaRNAs to Cajal bodies. Also plays a role in DNA repair: relocalizes to sites of DNA double-strand breaks in response to DNA damage and promotes the repair of DNA double-strand breaks. Acts by recruiting the ubiquitin ligase RNF8 to DNA breaks and promote both homologous recombination (HR) and non-homologous end joining (NHEJ). The sequence is that of Telomerase Cajal body protein 1 from Mesocricetus auratus (Golden hamster).